The chain runs to 387 residues: Putative purine permease 15 (387 aa).

Transmembrane regions (helical) follow at residues 44 to 64 (WVTI…ARLL), 84 to 104 (TLLQ…HFLI), 122 to 142 (LAIT…FSDV), 150 to 169 (VFTL…SKYY), 179 to 199 (FISL…FSAG), 210 to 230 (YGII…LCII), 252 to 272 (FVVV…ILVA), 306 to 326 (VAWQ…SAVF), 329 to 349 (VISV…YNTH), and 354 to 374 (VFRG…IYII).

Belongs to the purine permeases (TC 2.A.7.14) family.

Its subcellular location is the membrane. The sequence is that of Putative purine permease 15 (PUP15) from Arabidopsis thaliana (Mouse-ear cress).